Here is a 593-residue protein sequence, read N- to C-terminus: Cell surface glycoprotein (593 aa).

The N-terminal stretch at Met1–Ala22 is a signal peptide. Asn29, Asn58, Asn66, Asn74, Asn114, Asn122, Asn145, Asn148, Asn158, Asn176, Asn208, Asn231, Asn326, Asn336, Asn340, Asn431, Asn471, Asn500, and Asn516 each carry an N-linked (GalNAc...) asparagine glycan.

In terms of processing, N-glycosylated; contains glycans composed of methyl-Man, Man and GalNAc residues in a molar ratio of 2:3:1.

The protein resides in the secreted. It is found in the cell wall. It localises to the S-layer. Functionally, the S-layer is a paracrystalline mono-layered assembly of proteins which coat the surface of the cell. The sequence is that of Cell surface glycoprotein (slgA) from Methanothermus fervidus (strain ATCC 43054 / DSM 2088 / JCM 10308 / V24 S).